The following is a 447-amino-acid chain: Transcription factor azf1 (447 aa).

Disordered stretches follow at residues 125 to 155 (HNGA…NEVE) and 174 to 199 (QSPG…PQSY). Low complexity predominate over residues 127-139 (GASQQPPGAQSSS). The segment covering 140-155 (NEEGAQGKSSSSNEVE) has biased composition (polar residues). 4 consecutive C2H2-type zinc fingers follow at residues 225 to 249 (YACT…MRAH), 255 to 279 (FVCK…QRRH), 285 to 307 (FSCD…KITH), and 313 to 338 (FTCL…NKFH). The disordered stretch occupies residues 377 to 447 (NKGIKGRGKD…EPYFIERQAH (71 aa)). A compositionally biased stretch (basic and acidic residues) spans 397-416 (PGSESRRRIEPLSSTDDKMR). Polar residues predominate over residues 421–431 (GDTSMYNGGSS).

It is found in the nucleus. Its function is as follows. Transcription factor that acts as a positive regulator of ochratoxin A (OTA) biosynthesis via controlling the expression of antioxidant genes and oxidative phosphorylation genes. The chain is Transcription factor azf1 from Aspergillus niger (strain ATCC MYA-4892 / CBS 513.88 / FGSC A1513).